The sequence spans 129 residues: Transcription antitermination protein NusB (129 aa).

This sequence belongs to the NusB family.

Its function is as follows. Involved in transcription antitermination. Required for transcription of ribosomal RNA (rRNA) genes. Binds specifically to the boxA antiterminator sequence of the ribosomal RNA (rrn) operons. The protein is Transcription antitermination protein NusB of Staphylococcus aureus (strain USA300 / TCH1516).